Here is a 565-residue protein sequence, read N- to C-terminus: Dihydroxy-acid dehydratase (565 aa).

Aspartate 80 is a binding site for Mg(2+). Position 121 (cysteine 121) interacts with [2Fe-2S] cluster. Mg(2+) contacts are provided by aspartate 122 and lysine 123. Residue lysine 123 is modified to N6-carboxylysine. Cysteine 194 contributes to the [2Fe-2S] cluster binding site. Glutamate 447 lines the Mg(2+) pocket. The active-site Proton acceptor is the serine 473.

Belongs to the IlvD/Edd family. As to quaternary structure, homodimer. Requires [2Fe-2S] cluster as cofactor. The cofactor is Mg(2+).

The enzyme catalyses (2R)-2,3-dihydroxy-3-methylbutanoate = 3-methyl-2-oxobutanoate + H2O. It carries out the reaction (2R,3R)-2,3-dihydroxy-3-methylpentanoate = (S)-3-methyl-2-oxopentanoate + H2O. Its pathway is amino-acid biosynthesis; L-isoleucine biosynthesis; L-isoleucine from 2-oxobutanoate: step 3/4. It participates in amino-acid biosynthesis; L-valine biosynthesis; L-valine from pyruvate: step 3/4. Functions in the biosynthesis of branched-chain amino acids. Catalyzes the dehydration of (2R,3R)-2,3-dihydroxy-3-methylpentanoate (2,3-dihydroxy-3-methylvalerate) into 2-oxo-3-methylpentanoate (2-oxo-3-methylvalerate) and of (2R)-2,3-dihydroxy-3-methylbutanoate (2,3-dihydroxyisovalerate) into 2-oxo-3-methylbutanoate (2-oxoisovalerate), the penultimate precursor to L-isoleucine and L-valine, respectively. This chain is Dihydroxy-acid dehydratase, found in Chlorobium luteolum (strain DSM 273 / BCRC 81028 / 2530) (Pelodictyon luteolum).